A 2174-amino-acid polypeptide reads, in one-letter code: Spectinabilin polyketide synthase system protein NorB (2174 aa).

In terms of domain architecture, Ketosynthase family 3 (KS3) spans 34–459 (REPVAVVAMG…GTNAHVILEQ (426 aa)). Residues C206, H341, and H381 each act as for beta-ketoacyl synthase activity in the active site. Residues 567 to 888 (FLFSGQGSQR…AAVSRAFVQG (322 aa)) form the Malonyl-CoA:ACP transacylase (MAT) domain. Residues 938–1060 (HPLLGACLEL…GQLAPEAAAP (123 aa)) form an N-terminal hotdog fold region. A PKS/mFAS DH domain is found at 938–1212 (HPLLGACLEL…TRPITAGQLR (275 aa)). The active-site Proton acceptor; for dehydratase activity is the H970. A disordered region spans residues 1056 to 1075 (EAAAPPAAPGEDWPPPGAEP). Residues 1061 to 1074 (PAAPGEDWPPPGAE) show a composition bias toward pro residues. The tract at residues 1073-1212 (AEPVPLEGFY…TRPITAGQLR (140 aa)) is C-terminal hotdog fold. The active-site Proton donor; for dehydratase activity is D1134. One can recognise an Enoyl reductase (ER) domain in the interval 1424–1726 (GTVDDLVLAP…QARNVGKLVL (303 aa)). Residues 1736-1915 (GTILVTGGYG…ATALAWGMWA (180 aa)) form the Ketoreductase (KR) domain. Positions 2017–2092 (PAVRELVRGQ…ALTDAIEARL (76 aa)) constitute a Carrier domain. Residue S2052 is modified to O-(pantetheine 4'-phosphoryl)serine.

In terms of assembly, the spectinabilin polyketide synthase complex is composed of 4 proteins, NorA, NorA', NorB and NorC. The complex comprises 6 modules with a total of 28 catalytic domains catalyzing 7 chain elongations. NorA comprises one module, NorA' two modules, NorB one module and NorC two modules. Requires pantetheine 4'-phosphate as cofactor.

The enzyme catalyses 4-nitrobenzoyl-CoA + 6 (S)-methylmalonyl-CoA + malonyl-CoA + 6 NADPH + 12 H(+) = demethyldeoxyspectinabilin + 7 CO2 + 6 NADP(+) + 8 CoA + 5 H2O. It functions in the pathway antibiotic biosynthesis. Its pathway is polyketide biosynthesis. Component of a type I modular polyketide synthase (PKS) that generates the backbone of the antibiotic spectinabilin (also known as neoaureothin), a nitroaryl-substituted polyketide metabolite. This PKS system accepts the unusual starter unit 4-nitrobenzoyl-CoA and extends it by 6 molecules of (S)-methylmalonyl-CoA and a single molecule of malonyl-CoA. The polypeptide is Spectinabilin polyketide synthase system protein NorB (Streptomyces orinoci (Streptoverticillium orinoci)).